A 278-amino-acid polypeptide reads, in one-letter code: Small ribosomal subunit protein uS2 (278 aa).

Positions 233-258 are disordered; it reads IDMEAAGEAPANKGKKKSAKARLDKS.

This sequence belongs to the universal ribosomal protein uS2 family.

The protein is Small ribosomal subunit protein uS2 of Bacteroides fragilis (strain ATCC 25285 / DSM 2151 / CCUG 4856 / JCM 11019 / LMG 10263 / NCTC 9343 / Onslow / VPI 2553 / EN-2).